Reading from the N-terminus, the 161-residue chain is V-type proton ATPase 16 kDa proteolipid subunit c 2 (161 aa).

Residues 1 to 15 (MSYDLETAERAAYAP) are Lumenal-facing. Residues 16 to 36 (FFGYMGAASAQIFTVLGAAYG) traverse the membrane as a helical segment. At 37-58 (TAKSAVGICSMGVMRPELIMKS) the chain is on the cytoplasmic side. Residues 59–79 (VIPVIMAGIIGIYGLVVAMVL) traverse the membrane as a helical segment. Over 80–98 (KGKVTSASAGYDLNKGFAH) the chain is Lumenal. The chain crosses the membrane as a helical span at residues 99 to 119 (LAAGLTCGLCGLGAGYAIGIV). Residues 120 to 137 (GDAGVRGTAQQPRLFVGM) are Cytoplasmic-facing. Residues 138-158 (ILILIFSEVLGLYGMIVALIL) form a helical membrane-spanning segment. The Lumenal portion of the chain corresponds to 159 to 161 (GTS).

The protein belongs to the V-ATPase proteolipid subunit family. V-ATPase is a heteromultimeric enzyme made up of two complexes: the ATP-hydrolytic V1 complex and the proton translocation V0 complex. The V1 complex consists of three catalytic AB heterodimers that form a heterohexamer, three peripheral stalks each consisting of EG heterodimers, one central rotor including subunits D and F, and the regulatory subunits C and H. The proton translocation complex V0 consists of the proton transport subunit a, a ring of proteolipid subunits c9c'', rotary subunit d, subunits e and f, and the accessory subunits vah-19/Ac45 and vah-20/PRR. As to expression, expressed in the H-shaped excretory cell, rectum, and a pair of cells posterior to the anus.

The protein resides in the membrane. In terms of biological role, proton-conducting pore forming subunit of the V0 complex of vacuolar(H+)-ATPase (V-ATPase), a multisubunit enzyme composed of a peripheral complex (V1) that hydrolyzes ATP and a membrane integral complex (V0) that translocates protons. V-ATPase is responsible for acidifying and maintaining the pH of intracellular compartments and in some cell types, is targeted to the plasma membrane, where it is responsible for acidifying the extracellular environment. Involved in necrotic cell death. Required along with other vacuolar ATPase components for the removal of protein aggregates which form in immature oocytes in the distal gonad. This removal occurs as the oocytes mature and move to the proximal gonad, is triggered by the introduction of sperm through mating and occurs before fertilization. The introduction of sperm triggers V-ATPase accumulation in proximal oocytes and induces lysosomal acidification which leads to engulfing of protein aggregates by lysosomes and subsequent clearance of the aggregates. Lysosomal acidification also leads to changes in mitochondrial morphology and function. Mitochondria in distal immature oocytes are fragmented, produce high levels of reactive oxygen species (ROS) and have high membrane potential, indicative of metabolic inactivity. In contrast, mitochondria in proximal mature oocytes are tubular with lower ROS levels and membrane potential, indicative of an active metabolic state required for aggregate mobilization before clearance. This Caenorhabditis elegans protein is V-type proton ATPase 16 kDa proteolipid subunit c 2.